A 61-amino-acid chain; its full sequence is Large ribosomal subunit protein uL30 (61 aa).

It belongs to the universal ribosomal protein uL30 family. As to quaternary structure, part of the 50S ribosomal subunit.

The sequence is that of Large ribosomal subunit protein uL30 from Jannaschia sp. (strain CCS1).